The following is a 90-amino-acid chain: U7-theraphotoxin-Hhn1a 7 (90 aa).

An N-terminal signal peptide occupies residues 1-19 (MKTAIFTVVLALAVFAVLS). Residues 20 to 50 (FGWEANEKALSEGFTELIHEKEAASETEARE) constitute a propeptide that is removed on maturation. 3 cysteine pairs are disulfide-bonded: Cys-51–Cys-65, Cys-58–Cys-70, and Cys-64–Cys-81.

It belongs to the neurotoxin 10 (Hwtx-1) family. 13 (Hntx-13) subfamily. Expressed by the venom gland.

It is found in the secreted. Ion channel inhibitor. This is U7-theraphotoxin-Hhn1a 7 from Cyriopagopus hainanus (Chinese bird spider).